Consider the following 463-residue polypeptide: RuvB-like 2 (463 aa).

Residue alanine 2 is modified to N-acetylalanine. Lysine 9 is covalently cross-linked (Glycyl lysine isopeptide (Lys-Gly) (interchain with G-Cter in SUMO2)). Position 77 to 84 (77 to 84 (GQPGTGKT)) interacts with ATP. Serine 437 is subject to Phosphoserine. Glycyl lysine isopeptide (Lys-Gly) (interchain with G-Cter in SUMO2) cross-links involve residues lysine 444 and lysine 456.

The protein belongs to the RuvB family. Forms homohexameric rings. Can form a dodecamer with RUVBL1 made of two stacked hexameric rings; however, even though RUVBL1 and RUVBL2 are present in equimolar ratio, the oligomeric status of each hexamer is not known. Oligomerization may regulate binding to nucleic acids and conversely, binding to nucleic acids may affect the dodecameric assembly. Interaction of the complex with DHX34 results in conformational changes of the N-terminus of the RUVBL2 subunits, resulting in loss of nucleotide binding ability and ATP hydrolysis of the complex. Interacts with the transcriptional activation domain of MYC. Interacts with ATF2. Component of the RNA polymerase II holoenzyme complex. May also act to bridge the LEF1/TCF1-CTNNB1 complex and TBP. Component of the NuA4 histone acetyltransferase complex which contains the catalytic subunit KAT5/TIP60 and the subunits EP400, TRRAP/PAF400, BRD8/SMAP, EPC1, DMAP1/DNMAP1, RUVBL1/TIP49, RUVBL2, ING3, actin, ACTL6A/BAF53A, MORF4L1/MRG15, MORF4L2/MRGX, MRGBP, YEATS4/GAS41, VPS72/YL1 and MEAF6. The NuA4 complex interacts with MYC and the adenovirus E1A protein. RUVBL2 interacts with EP400. Component of a NuA4-related complex which contains EP400, TRRAP/PAF400, SRCAP, BRD8/SMAP, EPC1, DMAP1/DNMAP1, RUVBL1/TIP49, RUVBL2, actin, ACTL6A/BAF53A, VPS72 and YEATS4/GAS41. Interacts with NPAT. Component of the chromatin-remodeling INO80 complex; specifically part of a complex module associated with the helicase ATP-binding and the helicase C-terminal domain of INO80. Component of some MLL1/MLL complex, at least composed of the core components KMT2A/MLL1, ASH2L, HCFC1/HCF1, WDR5 and RBBP5, as well as the facultative components BACC1, CHD8, E2F6, HSP70, INO80C, KANSL1, LAS1L, MAX, MCRS1, MGA, MYST1/MOF, PELP1, PHF20, PRP31, RING2, RUVB1/TIP49A, RUVB2/TIP49B, SENP3, TAF1, TAF4, TAF6, TAF7, TAF9 and TEX10. Interacts with IGHMBP2. Interacts with TELO2. Interacts with HINT1. Component of a SWR1-like complex. Component of the R2TP complex composed at least of RUVBL1, RUVBL2, RPAP3 and PIHD1. Component of the PAQosome complex which is responsible for the biogenesis of several protein complexes and which consists of R2TP complex members RUVBL1, RUVBL2, RPAP3 and PIH1D1, URI complex members PFDN2, PFDN6, PDRG1, UXT and URI1 as well as ASDURF, POLR2E and DNAAF10/WDR92. Interacts with ITFG1. Interacts with ZMYND10. Interacts with WAC; WAC positively regulates MTOR activity by promoting the assembly of the TTT complex composed of TELO2, TTI1 and TTI2 and the RUVBL complex composed of RUVBL1 and RUVBL2 into the TTT-RUVBL complex which leads to the dimerization of the mTORC1 complex and its subsequent activation. Forms a complex with APPL1 and APPL2. Interacts with ZNHIT2 (via HIT-type zinc finger) in the presence of ATP or ADP; shows a stronger interaction in the presence of ADP. The RUVBL1/RUVBL2 complex interacts with ZNHIT1 (via HIT-type zinc finger), ZNHIT3 (via HIT-type zinc finger), ZNHIT6 (via HIT-type zinc finger) and DDX59/ZNHIT5 (via HIT-type zinc finger) in the presence of ADP. Interacts with NOPCHAP1; the interaction is direct and disrupted upon ATP binding. Interacts with SMG1.

It localises to the nucleus matrix. It is found in the nucleus. The protein resides in the nucleoplasm. Its subcellular location is the cytoplasm. The protein localises to the membrane. It localises to the dynein axonemal particle. The enzyme catalyses ATP + H2O = ADP + phosphate + H(+). Functionally, possesses single-stranded DNA-stimulated ATPase and ATP-dependent DNA helicase (5' to 3') activity; hexamerization is thought to be critical for ATP hydrolysis and adjacent subunits in the ring-like structure contribute to the ATPase activity. Component of the NuA4 histone acetyltransferase complex which is involved in transcriptional activation of select genes principally by acetylation of nucleosomal histones H4 and H2A. This modification may both alter nucleosome-DNA interactions and promote interaction of the modified histones with other proteins which positively regulate transcription. This complex may be required for the activation of transcriptional programs associated with oncogene and proto-oncogene mediated growth induction, tumor suppressor mediated growth arrest and replicative senescence, apoptosis, and DNA repair. The NuA4 complex ATPase and helicase activities seem to be, at least in part, contributed by the association of RUVBL1 and RUVBL2 with EP400. NuA4 may also play a direct role in DNA repair when recruited to sites of DNA damage. Component of a SWR1-like complex that specifically mediates the removal of histone H2A.Z/H2AZ1 from the nucleosome. Proposed core component of the chromatin remodeling INO80 complex which exhibits DNA- and nucleosome-activated ATPase activity and catalyzes ATP-dependent nucleosome sliding. Plays an essential role in oncogenic transformation by MYC and also modulates transcriptional activation by the LEF1/TCF1-CTNNB1 complex. May also inhibit the transcriptional activity of ATF2. Involved in the endoplasmic reticulum (ER)-associated degradation (ERAD) pathway where it negatively regulates expression of ER stress response genes. May play a role in regulating the composition of the U5 snRNP complex. The chain is RuvB-like 2 (RUVBL2) from Bos taurus (Bovine).